The primary structure comprises 197 residues: MDYNLDPSIAALIGYAFGSIPFGLLLTRMAGMGDVRSIGSGNIGATNVLRTGNKGLAALTLVLDLVKGFVPVWIAWRYFQNDIGWAALGAVVGHCFPIWLGFKGGKGVATNAGVCFGLGWGIGLAYAFVWLVMLAITRISSVAGMSAVVAAAGAAWYFGRPTFVPPLVIIAVIIIWLHRANIRRLLRGEEPRVGNKP.

A run of 5 helical transmembrane segments spans residues 7–27 (PSIA…LLLT), 56–76 (LAAL…WIAW), 82–102 (DIGW…WLGF), 116–136 (FGLG…MLAI), and 157–177 (YFGR…IIWL).

The protein belongs to the PlsY family. Probably interacts with PlsX.

It localises to the cell inner membrane. The catalysed reaction is an acyl phosphate + sn-glycerol 3-phosphate = a 1-acyl-sn-glycero-3-phosphate + phosphate. It participates in lipid metabolism; phospholipid metabolism. Its function is as follows. Catalyzes the transfer of an acyl group from acyl-phosphate (acyl-PO(4)) to glycerol-3-phosphate (G3P) to form lysophosphatidic acid (LPA). This enzyme utilizes acyl-phosphate as fatty acyl donor, but not acyl-CoA or acyl-ACP. This chain is Glycerol-3-phosphate acyltransferase, found in Erythrobacter litoralis (strain HTCC2594).